The chain runs to 555 residues: Alpha-1,2-mannosyltransferase ALG9 (555 aa).

At 1 to 7 (MNCKAVT) the chain is on the cytoplasmic side. The chain crosses the membrane as a helical span at residues 8 to 28 (ISLLLLLFLTRVYIQPTFSLI). Topologically, residues 29–62 (SDCDETFNYWEPLNLLVRGFGKQTWEYSPEYSIR) are lumenal. A helical transmembrane segment spans residues 63–83 (SWAFLLPFYCILYPVNKFTDL). At 84–86 (ESH) the chain is on the cytoplasmic side. The chain crosses the membrane as a helical span at residues 87–107 (WNFFITRACLGFFSFIMEFKL). Over 108 to 113 (HREIAG) the chain is Lumenal. A helical membrane pass occupies residues 114 to 134 (SLALQIANIWIIFQLFNPGWF). At 135–176 (HASVELLPSAVAMLLYVGATRHSLRYLSTGSTSNFTKSLAYN) the chain is on the cytoplasmic side. Residues 177 to 197 (FLASILGWPFVLILSLPLCLH) traverse the membrane as a helical segment. Over 198-213 (YLFNHRIISTIRTAFD) the chain is Lumenal. The helical transmembrane segment at 214–234 (CCLIFSLTAFAVIVTDSIFYG) threads the bilayer. Residues 235–268 (KLAPVSWNILFYNVINASEESGPNIFGVEPWYYY) are Cytoplasmic-facing. The chain crosses the membrane as a helical span at residues 269 to 289 (PLNLLLNFPLPVLVLAILGIF). Residues 290-316 (HLRLWPLWASLFTWIAVFTQQPHKEER) are Lumenal-facing. The helical transmembrane segment at 317–337 (FLYPIYGLITLSASIAFYKVL) threads the bilayer. Residues 338 to 349 (NLFNRKPILKKG) lie on the Cytoplasmic side of the membrane. Residues 350–370 (IKLSVLLIVAGQAMSRIVALV) form a helical membrane-spanning segment. Over 371-555 (NNYTAPIAVY…LFEKPTETTN (185 aa)) the chain is Lumenal.

This sequence belongs to the glycosyltransferase 22 family.

The protein localises to the endoplasmic reticulum membrane. The enzyme catalyses an alpha-D-Man-(1-&gt;2)-alpha-D-Man-(1-&gt;2)-alpha-D-Man-(1-&gt;3)-[alpha-D-Man-(1-&gt;3)-alpha-D-Man-(1-&gt;6)]-beta-D-Man-(1-&gt;4)-beta-D-GlcNAc-(1-&gt;4)-alpha-D-GlcNAc-diphospho-di-trans,poly-cis-dolichol + a di-trans,poly-cis-dolichyl beta-D-mannosyl phosphate = an alpha-D-Man-(1-&gt;2)-alpha-D-Man-(1-&gt;2)-alpha-D-Man-(1-&gt;3)-[alpha-D-Man-(1-&gt;2)-alpha-D-Man-(1-&gt;3)-alpha-D-Man-(1-&gt;6)]-beta-D-Man-(1-&gt;4)-beta-D-GlcNAc-(1-&gt;4)-alpha-D-GlcNAc-diphospho-di-trans,poly-cis-dolichol + a di-trans,poly-cis-dolichyl phosphate + H(+). It catalyses the reaction an alpha-D-Man-(1-&gt;2)-alpha-D-Man-(1-&gt;2)-alpha-D-Man-(1-&gt;3)-[alpha-D-Man-(1-&gt;2)-alpha-D-Man-(1-&gt;3)-[alpha-D-Man-(1-&gt;6)]-alpha-D-Man-(1-&gt;6)]-beta-D-Man-(1-&gt;4)-beta-D-GlcNAc-(1-&gt;4)-alpha-D-GlcNAc-diphospho-di-trans,poly-cis-dolichol + a di-trans,poly-cis-dolichyl beta-D-mannosyl phosphate = an alpha-D-Man-(1-&gt;2)-alpha-D-Man-(1-&gt;2)-alpha-D-Man-(1-&gt;3)-[alpha-D-Man-(1-&gt;2)-alpha-D-Man-(1-&gt;3)-[alpha-D-Man-(1-&gt;2)-alpha-D-Man-(1-&gt;6)]-alpha-D-Man-(1-&gt;6)]-beta-D-Man-(1-&gt;4)-beta-D-GlcNAc-(1-&gt;4)-alpha-D-GlcNAc-diphospho-di-trans,poly-cis-dolichol + a di-trans,poly-cis-dolichyl phosphate + H(+). Its pathway is protein modification; protein glycosylation. In terms of biological role, mannosyltransferase that operates in the biosynthetic pathway of dolichol-linked oligosaccharides, the glycan precursors employed in protein asparagine (N)-glycosylation. The assembly of dolichol-linked oligosaccharides begins on the cytosolic side of the endoplasmic reticulum membrane and finishes in its lumen. The sequential addition of sugars to dolichol pyrophosphate produces dolichol-linked oligosaccharides containing fourteen sugars, including two GlcNAcs, nine mannoses and three glucoses. Once assembled, the oligosaccharide is transferred from the lipid to nascent proteins by oligosaccharyltransferases. In the lumen of the endoplasmic reticulum, catalyzes the addition of the seventh and ninth alpha-1,2-linked mannose residues to Man(6)GlcNAc(2)-PP-dolichol and Man(8)GlcNAc(2)-PP-dolichol respectively. The protein is Alpha-1,2-mannosyltransferase ALG9 (ALG9) of Saccharomyces cerevisiae (strain ATCC 204508 / S288c) (Baker's yeast).